A 360-amino-acid polypeptide reads, in one-letter code: Farnesyl pyrophosphate synthase (360 aa).

Isopentenyl diphosphate contacts are provided by Lys52, Arg55, and Gln90. Mg(2+)-binding residues include Asp97 and Asp101. Residue Arg106 coordinates dimethylallyl diphosphate. Arg107 contributes to the isopentenyl diphosphate binding site. Dimethylallyl diphosphate-binding residues include Lys194, Thr195, Gln237, Lys254, and Lys263.

Belongs to the FPP/GGPP synthase family. The cofactor is Mg(2+).

The catalysed reaction is isopentenyl diphosphate + dimethylallyl diphosphate = (2E)-geranyl diphosphate + diphosphate. It catalyses the reaction isopentenyl diphosphate + (2E)-geranyl diphosphate = (2E,6E)-farnesyl diphosphate + diphosphate. It participates in isoprenoid biosynthesis; farnesyl diphosphate biosynthesis; farnesyl diphosphate from geranyl diphosphate and isopentenyl diphosphate: step 1/1. Its pathway is isoprenoid biosynthesis; geranyl diphosphate biosynthesis; geranyl diphosphate from dimethylallyl diphosphate and isopentenyl diphosphate: step 1/1. In terms of biological role, farnesyl pyrophosphate synthase; part of the second module of ergosterol biosynthesis pathway that includes the middle steps of the pathway. The second module involves the formation of farnesyl diphosphate, which is also an important intermediate in the biosynthesis of ubiquinone, dolichol, heme and prenylated proteins. This module also plays a key role in the biosynthesis of triterpenes such as ganoderic acids (GA), a group of highly oxygenated lanostane-type triterpenoids which are well recognized as a main group of unique bioactive compounds in the medicinal mushroom Ganoderma lucidum. Activity by the mevalonate kinase first converts mevalonate into 5-phosphomevalonate. 5-phosphomevalonate is then further converted to 5-diphosphomevalonate by the phosphomevalonate kinase. The diphosphomevalonate decarboxylase MVD then produces isopentenyl diphosphate. The isopentenyl-diphosphate delta-isomerase then catalyzes the 1,3-allylic rearrangement of the homoallylic substrate isopentenyl (IPP) to its highly electrophilic allylic isomer, dimethylallyl diphosphate (DMAPP). Finally the farnesyl diphosphate synthase FPS catalyzes the sequential condensation of isopentenyl pyrophosphate with dimethylallyl pyrophosphate, and then with the resultant geranylpyrophosphate to the ultimate product farnesyl pyrophosphate. The protein is Farnesyl pyrophosphate synthase of Ganoderma lucidum (Ling zhi medicinal fungus).